Reading from the N-terminus, the 230-residue chain is Urease accessory protein UreE (230 aa).

Positions 197-230 (LHIHAIHSHGDGDSHNHDHDHSHSHGDHDHDHKH) are disordered. Over residues 204-230 (SHGDGDSHNHDHDHSHSHGDHDHDHKH) the composition is skewed to basic and acidic residues.

The protein belongs to the UreE family.

Its subcellular location is the cytoplasm. Functionally, involved in urease metallocenter assembly. Binds nickel. Probably functions as a nickel donor during metallocenter assembly. This chain is Urease accessory protein UreE, found in Yersinia aldovae.